A 201-amino-acid chain; its full sequence is 3-isopropylmalate dehydratase small subunit (201 aa).

This sequence belongs to the LeuD family. LeuD type 1 subfamily. As to quaternary structure, heterodimer of LeuC and LeuD.

The catalysed reaction is (2R,3S)-3-isopropylmalate = (2S)-2-isopropylmalate. It functions in the pathway amino-acid biosynthesis; L-leucine biosynthesis; L-leucine from 3-methyl-2-oxobutanoate: step 2/4. Functionally, catalyzes the isomerization between 2-isopropylmalate and 3-isopropylmalate, via the formation of 2-isopropylmaleate. The chain is 3-isopropylmalate dehydratase small subunit from Jannaschia sp. (strain CCS1).